Reading from the N-terminus, the 100-residue chain is Large ribosomal subunit protein bL21 (100 aa).

This sequence belongs to the bacterial ribosomal protein bL21 family. In terms of assembly, part of the 50S ribosomal subunit. Contacts protein L20.

In terms of biological role, this protein binds to 23S rRNA in the presence of protein L20. The sequence is that of Large ribosomal subunit protein bL21 from Mycoplasmoides gallisepticum (strain R(low / passage 15 / clone 2)) (Mycoplasma gallisepticum).